The following is a 431-amino-acid chain: Gamma-glutamyl phosphate reductase (431 aa).

Belongs to the gamma-glutamyl phosphate reductase family.

The protein localises to the cytoplasm. It catalyses the reaction L-glutamate 5-semialdehyde + phosphate + NADP(+) = L-glutamyl 5-phosphate + NADPH + H(+). The protein operates within amino-acid biosynthesis; L-proline biosynthesis; L-glutamate 5-semialdehyde from L-glutamate: step 2/2. Catalyzes the NADPH-dependent reduction of L-glutamate 5-phosphate into L-glutamate 5-semialdehyde and phosphate. The product spontaneously undergoes cyclization to form 1-pyrroline-5-carboxylate. The polypeptide is Gamma-glutamyl phosphate reductase (Bifidobacterium longum subsp. infantis (strain ATCC 15697 / DSM 20088 / JCM 1222 / NCTC 11817 / S12)).